The primary structure comprises 390 residues: Nuclear receptor subfamily 2 group F member 6 (390 aa).

Over residues 1-15 the composition is skewed to gly residues; that stretch reads MAMVTGGWGDPGGDT. Residues 1–50 form a disordered region; it reads MAMVTGGWGDPGGDTNGVDKAGGSYPRATEDDSASPPGATSDAEPGDEER. A phosphoserine mark is found at serine 35 and serine 41. The nuclear receptor DNA-binding region spans 54–129; sequence QVDCVVCGDK…VGMRKEAVQR (76 aa). The NR C4-type zinc finger occupies 57–77; it reads CVVCGDKSSGKHYGVFTCEGC. At serine 84 the chain carries Phosphoserine. The NR C4-type zinc-finger motif lies at 93–117; that stretch reads CRSNRDCQIDQHHRNQCQYCRLKKC. The NR LBD domain maps to 157-380; that stretch reads PVSELIAQLL…TLIRDMLLSG (224 aa). The interval 314-390 is important for dimerization; that stretch reads LQEKAQVALT…STFNWPYGSG (77 aa).

It belongs to the nuclear hormone receptor family. NR2 subfamily. Binds DNA as dimer; homodimer and heterodimer with NR2F2 and probably NR2F1. Interacts with THRB.

The protein localises to the nucleus. Transcription factor predominantly involved in transcriptional repression. Binds to promoter/enhancer response elements that contain the imperfect 5'-AGGTCA-3' direct or inverted repeats with various spacings which are also recognized by other nuclear hormone receptors. Involved in modulation of hormonal responses. Represses transcriptional activity of the lutropin-choriogonadotropic hormone receptor/LHCGR gene, the renin/REN gene and the oxytocin-neurophysin/OXT gene. Represses the triiodothyronine-dependent and -independent transcriptional activity of the thyroid hormone receptor gene in a cell type-specific manner. The corepressing function towards thyroid hormone receptor beta/THRB involves at least in part the inhibition of THRB binding to triiodothyronine response elements (TREs) by NR2F6. Inhibits NFATC transcription factor DNA binding and subsequently its transcriptional activity. Acts as transcriptional repressor of IL-17 expression in Th-17 differentiated CD4(+) T cells and may be involved in induction and/or maintenance of peripheral immunological tolerance and autoimmunity. Involved in development of forebrain circadian clock; is required early in the development of the locus coeruleus (LC). This Mus musculus (Mouse) protein is Nuclear receptor subfamily 2 group F member 6 (Nr2f6).